A 158-amino-acid polypeptide reads, in one-letter code: Large ribosomal subunit protein uL15 (158 aa).

The segment covering 1-13 (MKLNEIKDNEGST) has biased composition (basic and acidic residues). The tract at residues 1 to 45 (MKLNEIKDNEGSTHSRKRLGRGIGSGSGKTGGRGVKGQKSRSGVA) is disordered. Over residues 21 to 35 (RGIGSGSGKTGGRGV) the composition is skewed to gly residues.

The protein belongs to the universal ribosomal protein uL15 family. In terms of assembly, part of the 50S ribosomal subunit.

In terms of biological role, binds to the 23S rRNA. This Rhizobium johnstonii (strain DSM 114642 / LMG 32736 / 3841) (Rhizobium leguminosarum bv. viciae) protein is Large ribosomal subunit protein uL15.